We begin with the raw amino-acid sequence, 173 residues long: Ribosome maturation factor RimM (173 aa).

The 80-residue stretch at 94–173 (EGEFYWRDLI…TIEVDWDPGF (80 aa)) folds into the PRC barrel domain.

This sequence belongs to the RimM family. As to quaternary structure, binds ribosomal protein uS19.

The protein localises to the cytoplasm. Its function is as follows. An accessory protein needed during the final step in the assembly of 30S ribosomal subunit, possibly for assembly of the head region. Essential for efficient processing of 16S rRNA. May be needed both before and after RbfA during the maturation of 16S rRNA. It has affinity for free ribosomal 30S subunits but not for 70S ribosomes. This is Ribosome maturation factor RimM from Aeromonas salmonicida (strain A449).